A 434-amino-acid chain; its full sequence is ATP-dependent protease ATPase subunit HslU (434 aa).

Residues V18, 60–65 (GVGKTE), D247, E312, and R384 each bind ATP.

Belongs to the ClpX chaperone family. HslU subfamily. As to quaternary structure, a double ring-shaped homohexamer of HslV is capped on each side by a ring-shaped HslU homohexamer. The assembly of the HslU/HslV complex is dependent on binding of ATP.

Its subcellular location is the cytoplasm. Its function is as follows. ATPase subunit of a proteasome-like degradation complex; this subunit has chaperone activity. The binding of ATP and its subsequent hydrolysis by HslU are essential for unfolding of protein substrates subsequently hydrolyzed by HslV. HslU recognizes the N-terminal part of its protein substrates and unfolds these before they are guided to HslV for hydrolysis. The polypeptide is ATP-dependent protease ATPase subunit HslU (Bradyrhizobium diazoefficiens (strain JCM 10833 / BCRC 13528 / IAM 13628 / NBRC 14792 / USDA 110)).